Consider the following 351-residue polypeptide: MTIAIGQEKTRGGFDLVDDWLKRDRFVFVGWSGLLLFPCAYLAVGGWLTGTTFVTSWYTHGLASSYLEGCNFLTAAVSTPANSMGHSLLFLWGPEAQGDFTRWCQIGGLWAFIALHGSFGLIGFCLRQFEIARLVGLRPYNAIAFSGPIAVFVSVFLMYPLGQASWFFAPSLGVAAIFRFLLFLQGFHNWTLNPFHMMGVAGILGGALLCAIHGATVQNTLFEDGDAADTFRAFTPTQSEETYSMVTANRFWSQIFGVAFSNKRWLHFFMLFVPVTGLWTSAFGIVGLALNLRAYDFVSQELRAAEDPEFETFYTKIILXDEGIRSWMAAQDQPHENFIFPEEVLPRGNAL.

A helical membrane pass occupies residues C39–T59. Position 116 (H116) interacts with chlorophyll a. A helical membrane pass occupies residues G123–P139. Residues Q128 and N141 each coordinate pheophytin a. A helical transmembrane segment spans residues V151–A164. H196 contacts chlorophyll a. The chain crosses the membrane as a helical span at residues G206–D226. Residues H213 and F260 each contribute to the a plastoquinone site. H213 is a binding site for Fe cation. H267 contributes to the Fe cation binding site. The chain crosses the membrane as a helical span at residues G277–R293.

This sequence belongs to the reaction center PufL/M/PsbA/D family. As to quaternary structure, PSII is composed of 1 copy each of membrane proteins PsbA, PsbB, PsbC, PsbD, PsbE, PsbF, PsbH, PsbI, PsbJ, PsbK, PsbL, PsbM, PsbT, PsbX, PsbY, PsbZ, Psb30/Ycf12, at least 3 peripheral proteins of the oxygen-evolving complex and a large number of cofactors. It forms dimeric complexes. It depends on The D1/D2 heterodimer binds P680, chlorophylls that are the primary electron donor of PSII, and subsequent electron acceptors. It shares a non-heme iron and each subunit binds pheophytin, quinone, additional chlorophylls, carotenoids and lipids. There is also a Cl(-1) ion associated with D1 and D2, which is required for oxygen evolution. The PSII complex binds additional chlorophylls, carotenoids and specific lipids. as a cofactor.

It localises to the plastid. The protein resides in the chloroplast thylakoid membrane. It carries out the reaction 2 a plastoquinone + 4 hnu + 2 H2O = 2 a plastoquinol + O2. Functionally, photosystem II (PSII) is a light-driven water:plastoquinone oxidoreductase that uses light energy to abstract electrons from H(2)O, generating O(2) and a proton gradient subsequently used for ATP formation. It consists of a core antenna complex that captures photons, and an electron transfer chain that converts photonic excitation into a charge separation. The D1/D2 (PsbA/PsbD) reaction center heterodimer binds P680, the primary electron donor of PSII as well as several subsequent electron acceptors. D2 is needed for assembly of a stable PSII complex. This is Photosystem II D2 protein from Pyropia yezoensis (Susabi-nori).